Consider the following 185-residue polypeptide: Elongation factor P (185 aa).

This sequence belongs to the elongation factor P family.

The protein localises to the cytoplasm. The protein operates within protein biosynthesis; polypeptide chain elongation. Involved in peptide bond synthesis. Stimulates efficient translation and peptide-bond synthesis on native or reconstituted 70S ribosomes in vitro. Probably functions indirectly by altering the affinity of the ribosome for aminoacyl-tRNA, thus increasing their reactivity as acceptors for peptidyl transferase. The sequence is that of Elongation factor P from Streptococcus equi subsp. equi (strain 4047).